A 33-amino-acid polypeptide reads, in one-letter code: Pardaxin P-4 (33 aa).

This sequence belongs to the pardaxin family. In terms of assembly, monomer. In aqueous solution exists as a tetramer.

Its subcellular location is the secreted. It localises to the target cell membrane. Exhibits unusual shark repellent and surfactant properties. Forms voltage-dependent, ion-permeable channels in membranes. At high concentration causes cell membrane lysis. The polypeptide is Pardaxin P-4 (Pardachirus marmoratus (Finless sole)).